Here is an 89-residue protein sequence, read N- to C-terminus: Signal recognition particle 19 kDa protein (89 aa).

Belongs to the SRP19 family. Part of the signal recognition particle protein translocation system, which is composed of SRP and FtsY. Archaeal SRP consists of a 7S RNA molecule of 300 nucleotides and two protein subunits: SRP54 and SRP19.

The protein resides in the cytoplasm. Involved in targeting and insertion of nascent membrane proteins into the cytoplasmic membrane. Binds directly to 7S RNA and mediates binding of the 54 kDa subunit of the SRP. This chain is Signal recognition particle 19 kDa protein, found in Methanococcus maripaludis (strain C7 / ATCC BAA-1331).